Consider the following 191-residue polypeptide: Probable nicotinate-nucleotide adenylyltransferase (191 aa).

It belongs to the NadD family.

The enzyme catalyses nicotinate beta-D-ribonucleotide + ATP + H(+) = deamido-NAD(+) + diphosphate. It functions in the pathway cofactor biosynthesis; NAD(+) biosynthesis; deamido-NAD(+) from nicotinate D-ribonucleotide: step 1/1. Catalyzes the reversible adenylation of nicotinate mononucleotide (NaMN) to nicotinic acid adenine dinucleotide (NaAD). The protein is Probable nicotinate-nucleotide adenylyltransferase of Oceanobacillus iheyensis (strain DSM 14371 / CIP 107618 / JCM 11309 / KCTC 3954 / HTE831).